Consider the following 330-residue polypeptide: Glycerol-3-phosphate dehydrogenase [NAD(P)+] (330 aa).

NADPH is bound by residues S10, W11, R31, and K105. Sn-glycerol 3-phosphate-binding residues include K105, G135, and S137. Position 139 (A139) interacts with NADPH. Residues K190, D243, S253, R254, and N255 each coordinate sn-glycerol 3-phosphate. The active-site Proton acceptor is K190. Residue R254 coordinates NADPH. 2 residues coordinate NADPH: V278 and E280.

This sequence belongs to the NAD-dependent glycerol-3-phosphate dehydrogenase family.

Its subcellular location is the cytoplasm. It catalyses the reaction sn-glycerol 3-phosphate + NAD(+) = dihydroxyacetone phosphate + NADH + H(+). The enzyme catalyses sn-glycerol 3-phosphate + NADP(+) = dihydroxyacetone phosphate + NADPH + H(+). It participates in membrane lipid metabolism; glycerophospholipid metabolism. Catalyzes the reduction of the glycolytic intermediate dihydroxyacetone phosphate (DHAP) to sn-glycerol 3-phosphate (G3P), the key precursor for phospholipid synthesis. The polypeptide is Glycerol-3-phosphate dehydrogenase [NAD(P)+] (Oleidesulfovibrio alaskensis (strain ATCC BAA-1058 / DSM 17464 / G20) (Desulfovibrio alaskensis)).